A 188-amino-acid polypeptide reads, in one-letter code: Elongation factor P (188 aa).

It belongs to the elongation factor P family.

The protein localises to the cytoplasm. It functions in the pathway protein biosynthesis; polypeptide chain elongation. In terms of biological role, involved in peptide bond synthesis. Stimulates efficient translation and peptide-bond synthesis on native or reconstituted 70S ribosomes in vitro. Probably functions indirectly by altering the affinity of the ribosome for aminoacyl-tRNA, thus increasing their reactivity as acceptors for peptidyl transferase. The protein is Elongation factor P of Wolbachia pipientis wMel.